We begin with the raw amino-acid sequence, 81 residues long: Consomatin Le1 (81 aa).

The signal sequence occupies residues 1 to 22 (MQTAYWVMVMMMVWITAPLSEG). A propeptide spanning residues 23–57 (GKPNDVIRGLVPDDLTPQLILRSLISRRRSDKDVR) is cleaved from the precursor. At Glu58 the chain carries 4-carboxyglutamate. An intrachain disulfide couples Cys62 to Cys67. Trp64 carries the post-translational modification D-tryptophan. Pro69 carries the 4-hydroxyproline modification. The propeptide occupies 71 to 81 (LWRRHDLKGKD).

This sequence belongs to the conotoxin C superfamily. Consomatin family. Expressed by the venom duct.

The protein resides in the secreted. In terms of biological role, moderately activates human somatostatin receptors (SSTR) with a preferential activation of SSTR1 and SSTR4. In vivo, does not cause behavioral changes in mice within a few minutes of intracranial injection, but causes a progressive loss of movement thereafter. Four to five hours after injection, mice recover, even with the highest dose tested. Shows antinociception and antihyperalgesia activities in two mouse models of acute pain, most probably by acting outside the central nervous system. The chain is Consomatin Le1 from Conus lenavati (Cone snail).